The sequence spans 585 residues: Parathyroid hormone/parathyroid hormone-related peptide receptor (585 aa).

Positions 1–26 (MGAARIAPGLALLLCCPVLSSAYALV) are cleaved as a signal peptide. The Extracellular portion of the chain corresponds to 27-184 (DADDVMTKEE…REREVFDRLG (158 aa)). 3 cysteine pairs are disulfide-bonded: Cys-48/Cys-113, Cys-104/Cys-144, and Cys-127/Cys-166. The disordered stretch occupies residues 66-100 (DKGWASAPTSGKPRKEKASGKLYPESGEDTGSRHQ). Residues Asn-147, Asn-157, Asn-162, and Asn-172 are each glycosylated (N-linked (GlcNAc...) asparagine). The chain crosses the membrane as a helical span at residues 185–208 (MIYTVGYSVSLASLTVAVLILAYF). At 209–215 (RRLHCTR) the chain is on the cytoplasmic side. The chain crosses the membrane as a helical span at residues 216–235 (NYIHMHLFLSFMLRAVSIFV). Residues 236 to 277 (KDAVLYSGATLDEAERLTEEELRAIAQAPLPPVAATSYVGCR) lie on the Extracellular side of the membrane. Residues 278-301 (VAVTFFLYFLATNYYWILVEGLYL) form a helical membrane-spanning segment. At 302 to 315 (HSLIFMAFFSEKKY) the chain is on the cytoplasmic side. A helical membrane pass occupies residues 316 to 337 (LWGFTVFGWGLPAIFVAVWVSV). The Extracellular segment spans residues 338-356 (RATLANTGCWDLSSGNKKW). The chain crosses the membrane as a helical span at residues 357–377 (IIQVPILASIVLNFILFINIV). Residues 378–404 (RVLATKLRETNAGRCDTRQQYRKLLKS) lie on the Cytoplasmic side of the membrane. Residues 405-423 (TLVLMPLFGVHYIVFMATP) traverse the membrane as a helical segment. The Extracellular portion of the chain corresponds to 424 to 435 (YTEVSGTLWQVQ). Residues 436-458 (MHYEMLFNSFQGFFVAIIYCFCN) traverse the membrane as a helical segment. Residues 459–585 (GEVQAEIKKS…LLQEEWETVM (127 aa)) lie on the Cytoplasmic side of the membrane. Positions 469–472 (WSRW) match the Important for interaction with G proteins motif. Thr-543 is modified (phosphothreonine).

This sequence belongs to the G-protein coupled receptor 2 family. As to quaternary structure, homodimer in the absence of bound ligand. Peptide hormone binding leads to dissociation of the homodimer. N-glycosylated.

Its subcellular location is the cell membrane. Its function is as follows. G-protein-coupled receptor for parathyroid hormone (PTH) and for parathyroid hormone-related peptide (PTHLH). Ligand binding causes a conformation change that triggers signaling via guanine nucleotide-binding proteins (G proteins) and modulates the activity of downstream effectors, such as adenylate cyclase (cAMP). PTH1R is coupled to G(s) G alpha proteins and mediates activation of adenylate cyclase activity. PTHLH dissociates from PTH1R more rapidly than PTH; as consequence, the cAMP response induced by PTHLH decays faster than the response induced by PTH. This chain is Parathyroid hormone/parathyroid hormone-related peptide receptor (PTH1R), found in Sus scrofa (Pig).